We begin with the raw amino-acid sequence, 828 residues long: E3 ubiquitin-protein ligase bre-1 (828 aa).

Residues 1-25 are disordered; that stretch reads MMKRNNEGIGGEGVANSPPDDTQQK. Positions 1–309 are interaction with ubc-1; sequence MMKRNNEGIG…SREIEALRAD (309 aa). 2 coiled-coil regions span residues 53-92 and 185-251; these read QAAKLRQTVLIKNKRISDLERENERAKRRQLTDESNFLKV and HKEL…TEKQ. Residues 269 to 298 show a composition bias toward low complexity; it reads ASGNATASSSATLNQSEKKMGSPGSPPSES. The disordered stretch occupies residues 269–304; that stretch reads ASGNATASSSATLNQSEKKMGSPGSPPSESTSREIE. 3 coiled-coil regions span residues 311-345, 460-616, and 660-756; these read DEQAAIAARRLQELEDTNRKLQSMAQDISKLKMET, VNTL…RNLK, and DEVL…NDSA. Residues 776-815 form an RING-type zinc finger; sequence CPSCKTRPKDCIMLKCYHLFCETCIKTMYDTRQRKCPKCN.

It belongs to the BRE1 family. In terms of assembly, interacts with ubc-1. Interacts with mrg-1.

The protein localises to the nucleus. The catalysed reaction is S-ubiquitinyl-[E2 ubiquitin-conjugating enzyme]-L-cysteine + [acceptor protein]-L-lysine = [E2 ubiquitin-conjugating enzyme]-L-cysteine + N(6)-ubiquitinyl-[acceptor protein]-L-lysine.. It functions in the pathway protein modification; protein ubiquitination. E3 ubiquitin-protein ligase that mediates monoubiquitination of 'Lys-117' of histone H2B. H2B 'Lys-117' ubiquitination gives a specific tag for epigenetic transcriptional activation and is also prerequisite for histone H3 'Lys-4' and 'Lys-79' methylation. Involved in regulating stem cell proliferative fate. This is E3 ubiquitin-protein ligase bre-1 from Caenorhabditis briggsae.